Reading from the N-terminus, the 102-residue chain is Large ribosomal subunit protein bL21 (102 aa).

This sequence belongs to the bacterial ribosomal protein bL21 family. In terms of assembly, part of the 50S ribosomal subunit. Contacts protein L20.

Functionally, this protein binds to 23S rRNA in the presence of protein L20. This chain is Large ribosomal subunit protein bL21, found in Campylobacter lari (strain RM2100 / D67 / ATCC BAA-1060).